A 388-amino-acid polypeptide reads, in one-letter code: Flap endonuclease 1 (388 aa).

The tract at residues 1 to 104 (MGILGLSKLI…GELAKRAERR (104 aa)) is N-domain. Asp34 lines the Mg(2+) pocket. Residues Arg47 and Arg70 each coordinate DNA. Positions 86, 158, 160, 179, and 181 each coordinate Mg(2+). Residues 122–253 (EIEKFNRRLV…KRAIELINSY (132 aa)) are I-domain. Glu158 provides a ligand contact to DNA. Residues Gly231 and Asp233 each coordinate DNA. Asp233 provides a ligand contact to Mg(2+). The interaction with PCNA stretch occupies residues 336–344 (TQVRLDSFF). A disordered region spans residues 355–388 (AAAKRKAEEAKKSANNKKAKIGGGGGAGRGRRPK).

This sequence belongs to the XPG/RAD2 endonuclease family. FEN1 subfamily. In terms of assembly, interacts with PCNA. Three molecules of FEN1 bind to one PCNA trimer with each molecule binding to one PCNA monomer. PCNA stimulates the nuclease activity without altering cleavage specificity. Requires Mg(2+) as cofactor. Post-translationally, phosphorylated. Phosphorylation upon DNA damage induces relocalization to the nuclear plasma.

Its subcellular location is the nucleus. The protein resides in the nucleolus. The protein localises to the nucleoplasm. It is found in the mitochondrion. Structure-specific nuclease with 5'-flap endonuclease and 5'-3' exonuclease activities involved in DNA replication and repair. During DNA replication, cleaves the 5'-overhanging flap structure that is generated by displacement synthesis when DNA polymerase encounters the 5'-end of a downstream Okazaki fragment. It enters the flap from the 5'-end and then tracks to cleave the flap base, leaving a nick for ligation. Also involved in the long patch base excision repair (LP-BER) pathway, by cleaving within the apurinic/apyrimidinic (AP) site-terminated flap. Acts as a genome stabilization factor that prevents flaps from equilibrating into structures that lead to duplications and deletions. Also possesses 5'-3' exonuclease activity on nicked or gapped double-stranded DNA, and exhibits RNase H activity. Also involved in replication and repair of rDNA and in repairing mitochondrial DNA. This Drosophila willistoni (Fruit fly) protein is Flap endonuclease 1.